Here is a 230-residue protein sequence, read N- to C-terminus: Increased recombination centers protein 19 (230 aa).

This sequence belongs to the IRC19 family.

Involved in sporulation and maintenance of the mitochondrial DNA. Is probably involved in a pathway contributing to genomic integrity. This Saccharomyces cerevisiae (strain ATCC 204508 / S288c) (Baker's yeast) protein is Increased recombination centers protein 19 (IRC19).